Reading from the N-terminus, the 232-residue chain is 5'-methylthioadenosine/S-adenosylhomocysteine nucleosidase (232 aa).

The Proton acceptor role is filled by E12. Substrate-binding positions include G78, I152, and 173–174; that span reads ME. D197 (proton donor) is an active-site residue.

Belongs to the PNP/UDP phosphorylase family. MtnN subfamily. Homodimer.

It catalyses the reaction S-adenosyl-L-homocysteine + H2O = S-(5-deoxy-D-ribos-5-yl)-L-homocysteine + adenine. It carries out the reaction S-methyl-5'-thioadenosine + H2O = 5-(methylsulfanyl)-D-ribose + adenine. The enzyme catalyses 5'-deoxyadenosine + H2O = 5-deoxy-D-ribose + adenine. The protein operates within amino-acid biosynthesis; L-methionine biosynthesis via salvage pathway; S-methyl-5-thio-alpha-D-ribose 1-phosphate from S-methyl-5'-thioadenosine (hydrolase route): step 1/2. In terms of biological role, catalyzes the irreversible cleavage of the glycosidic bond in both 5'-methylthioadenosine (MTA) and S-adenosylhomocysteine (SAH/AdoHcy) to adenine and the corresponding thioribose, 5'-methylthioribose and S-ribosylhomocysteine, respectively. Also cleaves 5'-deoxyadenosine, a toxic by-product of radical S-adenosylmethionine (SAM) enzymes, into 5-deoxyribose and adenine. Thus, is required for in vivo function of the radical SAM enzymes biotin synthase and lipoic acid synthase, that are inhibited by 5'-deoxyadenosine accumulation. The sequence is that of 5'-methylthioadenosine/S-adenosylhomocysteine nucleosidase from Salmonella choleraesuis (strain SC-B67).